A 263-amino-acid polypeptide reads, in one-letter code: Protein M1627_2099 (263 aa).

This sequence belongs to the CinA family.

In Saccharolobus islandicus (strain M.16.27) (Sulfolobus islandicus), this protein is Protein M1627_2099.